The chain runs to 460 residues: Elongation factor 1-alpha-A (460 aa).

The residue at position 2 (G2) is a N,N,N-trimethylglycine. Position 3 is an N6,N6-dimethyllysine; alternate (K3). Position 3 is an N6-methyllysine; alternate (K3). Residues 5–240 form the tr-type G domain; it reads KGHINVVVIG…DSIEPPARPT (236 aa). The tract at residues 14 to 21 is G1; the sequence is GHVDSGKS. Residue 14–21 coordinates GTP; the sequence is GHVDSGKS. An N6-methyllysine modification is found at K30. Residues 70–74 are G2; it reads GITID. N6,N6,N6-trimethyllysine is present on K79. Positions 91 to 94 are G3; the sequence is DAPG. GTP is bound by residues 91 to 95 and 153 to 156; these read DAPGH and NKMD. Positions 153-156 are G4; that stretch reads NKMD. Residues 192–194 form a G5 region; that stretch reads SGF. K316 carries the post-translational modification N6,N6-dimethyllysine; alternate. At K316 the chain carries N6-methyllysine; alternate. Residue K390 is modified to N6-methyllysine.

Belongs to the TRAFAC class translation factor GTPase superfamily. Classic translation factor GTPase family. EF-Tu/EF-1A subfamily.

It localises to the cytoplasm. Its function is as follows. This protein promotes the GTP-dependent binding of aminoacyl-tRNA to the A-site of ribosomes during protein biosynthesis. This Schizosaccharomyces pombe (strain 972 / ATCC 24843) (Fission yeast) protein is Elongation factor 1-alpha-A (tef101).